We begin with the raw amino-acid sequence, 260 residues long: 2-amino-5-formylamino-6-ribosylaminopyrimidin-4(3H)-one 5'-monophosphate deformylase (260 aa).

The Fe cation site is built by glutamate 33, histidine 35, aspartate 44, and histidine 112.

Belongs to the creatininase superfamily. FAPy deformylase family. Homodimer. Fe(2+) serves as cofactor. Requires Zn(2+) as cofactor.

The catalysed reaction is 2-amino-5-formylamino-6-(5-phospho-D-ribosylamino)pyrimidin-4(3H)-one + H2O = 2,5-diamino-6-(1-D-ribosylamino)pyrimidin-4(3H)-one 5'-phosphate + formate + H(+). Its pathway is cofactor biosynthesis; coenzyme F420 biosynthesis. It participates in cofactor biosynthesis; riboflavin biosynthesis. Catalyzes the hydrolysis of the formamide of 2-amino-5-formylamino-6-ribosylamino-4(3H)-pyrimidinone 5'-monophosphate (FAPy) to form 2,5-diamino-6-ribosylamino-4(3H)-pyrimidinone 5'-phosphate (APy). The protein is 2-amino-5-formylamino-6-ribosylaminopyrimidin-4(3H)-one 5'-monophosphate deformylase of Methanococcus voltae (strain ATCC BAA-1334 / A3).